A 336-amino-acid polypeptide reads, in one-letter code: Dihydroorotate dehydrogenase (quinone) (336 aa).

FMN is bound by residues 62 to 66 (AGLDK) and threonine 86. Lysine 66 serves as a coordination point for substrate. A substrate-binding site is contributed by 111-115 (NRMGF). FMN-binding residues include asparagine 139 and asparagine 172. A substrate-binding site is contributed by asparagine 172. Serine 175 (nucleophile) is an active-site residue. Position 177 (asparagine 177) interacts with substrate. 2 residues coordinate FMN: lysine 217 and threonine 245. 246-247 (NT) is a substrate binding site. Residues glycine 268, glycine 297, and 318–319 (YS) each bind FMN.

It belongs to the dihydroorotate dehydrogenase family. Type 2 subfamily. In terms of assembly, monomer. FMN is required as a cofactor.

The protein resides in the cell membrane. It carries out the reaction (S)-dihydroorotate + a quinone = orotate + a quinol. It functions in the pathway pyrimidine metabolism; UMP biosynthesis via de novo pathway; orotate from (S)-dihydroorotate (quinone route): step 1/1. In terms of biological role, catalyzes the conversion of dihydroorotate to orotate with quinone as electron acceptor. The protein is Dihydroorotate dehydrogenase (quinone) of Yersinia pseudotuberculosis serotype O:1b (strain IP 31758).